The following is a 185-amino-acid chain: Peptidyl-tRNA hydrolase (185 aa).

A tRNA-binding site is contributed by Y14. H19 serves as the catalytic Proton acceptor. Residues Y64, N66, and N112 each contribute to the tRNA site.

It belongs to the PTH family. As to quaternary structure, monomer.

The protein resides in the cytoplasm. The enzyme catalyses an N-acyl-L-alpha-aminoacyl-tRNA + H2O = an N-acyl-L-amino acid + a tRNA + H(+). Functionally, hydrolyzes ribosome-free peptidyl-tRNAs (with 1 or more amino acids incorporated), which drop off the ribosome during protein synthesis, or as a result of ribosome stalling. Its function is as follows. Catalyzes the release of premature peptidyl moieties from peptidyl-tRNA molecules trapped in stalled 50S ribosomal subunits, and thus maintains levels of free tRNAs and 50S ribosomes. The chain is Peptidyl-tRNA hydrolase from Pediococcus pentosaceus (strain ATCC 25745 / CCUG 21536 / LMG 10740 / 183-1w).